The sequence spans 106 residues: Gibberellin-regulated protein 12 (106 aa).

Positions M1–G22 are cleaved as a signal peptide.

It belongs to the GASA family. In terms of processing, six disulfide bonds may be present.

The protein resides in the secreted. Functionally, gibberellin-regulated protein that may function in hormonal controlled steps of development such as seed germination, flowering and seed maturation. The protein is Gibberellin-regulated protein 12 (GASA12) of Arabidopsis thaliana (Mouse-ear cress).